A 144-amino-acid polypeptide reads, in one-letter code: MRLNTLSPAEGAKHAPKRLGRGIGSGLGKTGGRGHKGQNSRSGGGVRRGFEGGQMPLYRRLPKFGFTSRKAMITSEVRLSDLAKVEGDVVDLNTLKAANVIGIQIEFAKVILSGEVARPVTIRGLRVTKGARAAIEAAGGKIEE.

The disordered stretch occupies residues 1-53 (MRLNTLSPAEGAKHAPKRLGRGIGSGLGKTGGRGHKGQNSRSGGGVRRGFEGG). Over residues 21–31 (RGIGSGLGKTG) the composition is skewed to gly residues.

It belongs to the universal ribosomal protein uL15 family. Part of the 50S ribosomal subunit.

Binds to the 23S rRNA. This Pectobacterium atrosepticum (strain SCRI 1043 / ATCC BAA-672) (Erwinia carotovora subsp. atroseptica) protein is Large ribosomal subunit protein uL15.